The following is a 185-amino-acid chain: MKGIANSLIYLSYWPSAGSFGFNTNILETNIINITVVLGILIYFGKGVLSNLLDNRKSKIYSTIQNSEELCKGARHQLEKARARLQEIEMRVDEIRANGYLQIEQEKEDLVQAASVNLKQLEDSKNETVSFEQQKVIDQVRQQVSYQALQKALTFMKNCLNTELHLRMINYNIGRLRAKRTGQFL.

Residues 31–53 (IINITVVLGILIYFGKGVLSNLL) form a helical membrane-spanning segment.

It belongs to the ATPase B chain family. In terms of assembly, F-type ATPases have 2 components, F(1) - the catalytic core - and F(0) - the membrane proton channel. F(1) has five subunits: alpha(3), beta(3), gamma(1), delta(1), epsilon(1). F(0) has four main subunits: a(1), b(1), b'(1) and c(10-14). The alpha and beta chains form an alternating ring which encloses part of the gamma chain. F(1) is attached to F(0) by a central stalk formed by the gamma and epsilon chains, while a peripheral stalk is formed by the delta, b and b' chains.

Its subcellular location is the plastid. The protein localises to the chloroplast thylakoid membrane. F(1)F(0) ATP synthase produces ATP from ADP in the presence of a proton or sodium gradient. F-type ATPases consist of two structural domains, F(1) containing the extramembraneous catalytic core and F(0) containing the membrane proton channel, linked together by a central stalk and a peripheral stalk. During catalysis, ATP synthesis in the catalytic domain of F(1) is coupled via a rotary mechanism of the central stalk subunits to proton translocation. Functionally, component of the F(0) channel, it forms part of the peripheral stalk, linking F(1) to F(0). This is ATP synthase subunit b, chloroplastic from Gnetum parvifolium (Small-leaved jointfir).